Reading from the N-terminus, the 352-residue chain is Phosphoribosylformylglycinamidine cyclo-ligase (352 aa).

It belongs to the AIR synthase family.

Its subcellular location is the cytoplasm. It carries out the reaction 2-formamido-N(1)-(5-O-phospho-beta-D-ribosyl)acetamidine + ATP = 5-amino-1-(5-phospho-beta-D-ribosyl)imidazole + ADP + phosphate + H(+). It participates in purine metabolism; IMP biosynthesis via de novo pathway; 5-amino-1-(5-phospho-D-ribosyl)imidazole from N(2)-formyl-N(1)-(5-phospho-D-ribosyl)glycinamide: step 2/2. This chain is Phosphoribosylformylglycinamidine cyclo-ligase, found in Saccharophagus degradans (strain 2-40 / ATCC 43961 / DSM 17024).